The primary structure comprises 260 residues: Thrombin-like enzyme acutobin (260 aa).

A signal peptide spans 1-18 (MVLIRVLANLLILQLSYA). Residues 19-24 (QKSSEL) constitute a propeptide that is removed on maturation. The 227-residue stretch at 25–251 (VIGGVECDIN…YNDWIRSITA (227 aa)) folds into the Peptidase S1 domain. 6 disulfides stabilise this stretch: cysteine 31–cysteine 165, cysteine 52–cysteine 68, cysteine 102–cysteine 258, cysteine 144–cysteine 212, cysteine 176–cysteine 191, and cysteine 202–cysteine 227. Histidine 67 acts as the Charge relay system in catalysis. 2 N-linked (GlcNAc...) asparagine glycosylation sites follow: asparagine 101 and asparagine 105. The Charge relay system role is filled by aspartate 112. N-linked (GlcNAc...) asparagine glycosylation is present at asparagine 124. Catalysis depends on serine 206, which acts as the Charge relay system. Residue asparagine 253 is glycosylated (N-linked (GlcNAc...) asparagine).

It belongs to the peptidase S1 family. Snake venom subfamily. Monomer. N-glycosylated. Expressed by the venom gland.

It localises to the secreted. Functionally, thrombin-like snake venom serine protease that coagulates human fibrinogen by hydrolysis of the alpha chains (FGA). This chain is Thrombin-like enzyme acutobin, found in Deinagkistrodon acutus (Hundred-pace snake).